The following is a 231-amino-acid chain: 5'-methylthioadenosine/S-adenosylhomocysteine nucleosidase (231 aa).

Glutamate 12 acts as the Proton acceptor in catalysis. Residues glycine 78, methionine 153, and 174–175 (ME) contribute to the substrate site. Residue aspartate 198 is the Proton donor of the active site.

Belongs to the PNP/UDP phosphorylase family. MtnN subfamily.

The enzyme catalyses S-adenosyl-L-homocysteine + H2O = S-(5-deoxy-D-ribos-5-yl)-L-homocysteine + adenine. The catalysed reaction is S-methyl-5'-thioadenosine + H2O = 5-(methylsulfanyl)-D-ribose + adenine. It catalyses the reaction 5'-deoxyadenosine + H2O = 5-deoxy-D-ribose + adenine. Its pathway is amino-acid biosynthesis; L-methionine biosynthesis via salvage pathway; S-methyl-5-thio-alpha-D-ribose 1-phosphate from S-methyl-5'-thioadenosine (hydrolase route): step 1/2. Catalyzes the irreversible cleavage of the glycosidic bond in both 5'-methylthioadenosine (MTA) and S-adenosylhomocysteine (SAH/AdoHcy) to adenine and the corresponding thioribose, 5'-methylthioribose and S-ribosylhomocysteine, respectively. Also cleaves 5'-deoxyadenosine, a toxic by-product of radical S-adenosylmethionine (SAM) enzymes, into 5-deoxyribose and adenine. The chain is 5'-methylthioadenosine/S-adenosylhomocysteine nucleosidase from Bacillus cereus (strain G9842).